Consider the following 708-residue polypeptide: Pre-mRNA-splicing factor SPP382 (708 aa).

The 48-residue stretch at 61 to 108 (TYGIGAKLLSSMGYVAGKGLGKDGSGITTPIETQSRPMHNAGLGMFSN) folds into the G-patch domain.

In terms of assembly, component of the NTR complex (NTC-related complex), composed of NTR1, NTR2 and PRP43. Interacts with CLF1 and NTR2. Interacts with PRP43 and PRP45.

It localises to the cytoplasm. The protein localises to the nucleus. Functionally, involved in pre-mRNA splicing and spliceosome disassembly. Promotes release of excised lariat intron from the spliceosome by acting as a receptor for PRP43. This targeting of PRP43 leads to disassembly of the spliceosome with the separation of the U2, U5, U6 snRNPs and the NTC complex. The protein is Pre-mRNA-splicing factor SPP382 (SPP382) of Saccharomyces cerevisiae (strain ATCC 204508 / S288c) (Baker's yeast).